The sequence spans 47 residues: Heat shock protein HSP 90 (47 aa).

Belongs to the heat shock protein 90 family. As to quaternary structure, homodimer.

It localises to the cytoplasm. In terms of biological role, putative molecular chaperone that may promote the maturation, structural maintenance and proper regulation of specific target proteins. The chain is Heat shock protein HSP 90 from Oryctolagus cuniculus (Rabbit).